The chain runs to 882 residues: Ion channel DMI1 (882 aa).

The disordered stretch occupies residues Met-1–Gln-122. The segment covering Thr-48 to Tyr-62 has biased composition (polar residues). Residues Pro-78 to Arg-95 show a composition bias toward pro residues. Over residues Ser-107–Ser-117 the composition is skewed to low complexity. 4 helical membrane-spanning segments follow: residues Ser-129–Leu-149, Thr-192–Leu-212, Leu-255–Val-275, and Ile-307–Val-327. 2 RCK N-terminal domains span residues Arg-348 to Val-489 and Pro-608 to Ile-757. The stretch at Val-378–Gly-403 forms a coiled coil.

It belongs to the castor/pollux (TC 1.A.1.23) family. Interacts (via c-terminus) with CNGC15A, CNGC15B and CNGC15C (via N-terminus). The Nod factor has no effect on these interactions, implying that the complex is maintained after activation. Mainly expressed in roots and nodules. Also detected in pods, flowers, leaves, and stems.

The protein resides in the nucleus membrane. In terms of biological role, required for early signal transduction events leading to endosymbiosis. Acts early in a signal transduction chain leading from the perception of Nod factor to the activation of calcium spiking. Also involved in mycorrhizal symbiosis. May be involved in the regulation of the calcium channel responsible for calcium spiking by mobilizing another cation, and thereby altering the membrane potential. This Medicago truncatula (Barrel medic) protein is Ion channel DMI1.